The primary structure comprises 324 residues: MSRERIKRELPPVQEHIDKLRKVIEEGNYYGALQMYKSISARYVTAQRFSEALDILFSGACIELEHGLVNCGADLAILFVDTLVKAKSPCNDETLDRIRCIFKLFPRVPVPPHLVDVSDDEDVQNLQESLGEARSRVENLTSFLRAAIKWSAEFGGPRTGYPELHAMLGDYLYTECPELDMVRISRHFVRAEDPEKFASMLVNFMGRCYPGEDDLAIARAVLMYLSMGNMKDANFMMDEIKKQAETKNPELSESDLIQFISYLLETLQRDALPLFNMLRVKYKSSIDRDQLLNELLDEIAERFYGVQRKNPLQGMFGDIFKMMG.

Belongs to the GET4 family. Interacts with GET3A.

It localises to the cytoplasm. The protein localises to the cytosol. Its function is as follows. Involved in the regulation of root hair growth. In Arabidopsis thaliana (Mouse-ear cress), this protein is Protein GET4.